A 146-amino-acid chain; its full sequence is U1 small nuclear ribonucleoprotein C (146 aa).

A Matrin-type zinc finger spans residues 4 to 36; the sequence is YYCDYCDTYLTHDSPSVRKTHCTGRKHRDNVKF. Residues 64–96 are disordered; that stretch reads NNPFAGGPSSAPPKPSGVSIPPPNMGAPPRPGM. Residues 73–96 are compositionally biased toward pro residues; the sequence is SAPPKPSGVSIPPPNMGAPPRPGM.

This sequence belongs to the U1 small nuclear ribonucleoprotein C family. As to quaternary structure, U1 snRNP is composed of the 7 core Sm proteins B/B', D1, D2, D3, E, F and G that assemble in a heptameric protein ring on the Sm site of the small nuclear RNA to form the core snRNP, and at least 3 U1 snRNP-specific proteins U1-70K, U1-A and U1-C. U1-C interacts with U1 snRNA and the 5' splice-site region of the pre-mRNA.

The protein localises to the nucleus. In terms of biological role, component of the spliceosomal U1 snRNP, which is essential for recognition of the pre-mRNA 5' splice-site and the subsequent assembly of the spliceosome. U1-C is directly involved in initial 5' splice-site recognition for both constitutive and regulated alternative splicing. The interaction with the 5' splice-site seems to precede base-pairing between the pre-mRNA and the U1 snRNA. Stimulates commitment or early (E) complex formation by stabilizing the base pairing of the 5' end of the U1 snRNA and the 5' splice-site region. The chain is U1 small nuclear ribonucleoprotein C from Drosophila pseudoobscura pseudoobscura (Fruit fly).